Consider the following 453-residue polypeptide: Ethanolamine ammonia-lyase large subunit (453 aa).

Substrate contacts are provided by residues 160–162 (RLQ) and Asn193. 2 residues coordinate adenosylcob(III)alamin: Pro194 and Gln246. Glu287 provides a ligand contact to substrate. Ser295 contributes to the adenosylcob(III)alamin binding site. Residue Asp362 coordinates substrate. An adenosylcob(III)alamin-binding site is contributed by Met401.

This sequence belongs to the EutB family. As to quaternary structure, the basic unit is a heterodimer which dimerizes to form tetramers. The heterotetramers trimerize; 6 large subunits form a core ring with 6 small subunits projecting outwards. Adenosylcob(III)alamin is required as a cofactor.

It is found in the bacterial microcompartment. It catalyses the reaction ethanolamine = acetaldehyde + NH4(+). It participates in amine and polyamine degradation; ethanolamine degradation. Functionally, catalyzes the deamination of various vicinal amino-alcohols to oxo compounds. Allows this organism to utilize ethanolamine as the sole source of nitrogen and carbon in the presence of vitamin B12. This chain is Ethanolamine ammonia-lyase large subunit, found in Escherichia coli O157:H7.